A 263-amino-acid chain; its full sequence is MAPTQAQKVLEAFEDFLKCLDLESYQEKYRPIKTVEQDLPRELNPLPDLYDHYWKPNGNTLHFPDFETFFDQWWEKRLRPLNEFIRKYFWGCSYEFVRLGLEARLYRTAVSIWTQFHFCYRWNASCQLRLTATWELDAQGIDAQIQAEDRLIGIQIKKETYRSEAREGNRFLRRREHSALLEVPYTLQSPEELERKAQRARTREEAYRLWVKIAHHLERLPNGFVIFRESYVKDLENFLKQNATTLSGLIPWDKVAREALTGP.

It catalyses the reaction Endonucleolytic cleavage of DNA to give specific double-stranded fragments with terminal 5'-phosphates.. Functionally, a P subtype restriction enzyme that recognizes the double-stranded sequence 5'-TCGA-3' and cleaves after T-1. This chain is Type II restriction enzyme TthHB8I (tthHB8IR), found in Thermus thermophilus (strain ATCC 27634 / DSM 579 / HB8).